Reading from the N-terminus, the 292-residue chain is Protease HtpX (292 aa).

2 helical membrane-spanning segments follow: residues 5-25 (IFLF…VMSV) and 34-54 (SGLL…SLLL). A Zn(2+)-binding site is contributed by His140. Glu141 is an active-site residue. Zn(2+) is bound at residue His144. The next 2 membrane-spanning stretches (helical) occupy residues 155–175 (LLQG…GGII) and 193–213 (IIVF…AMWF). Glu218 contacts Zn(2+).

This sequence belongs to the peptidase M48B family. Requires Zn(2+) as cofactor.

It localises to the cell inner membrane. This chain is Protease HtpX, found in Xanthomonas oryzae pv. oryzae (strain MAFF 311018).